Reading from the N-terminus, the 157-residue chain is Baculoviral IAP repeat-containing protein 5.2-B (157 aa).

The BIR repeat unit spans residues 31 to 101 (RLRTFSNWPF…KHSPSCLFIA (71 aa)). The residue at position 47 (Thr-47) is a Phosphothreonine; by CDK1. Zn(2+) is bound by residues Cys-70, Cys-73, His-90, and Cys-97.

The protein belongs to the IAP family. In terms of assembly, component of the CPC at least composed of survivin/birc5, incenp, cdca8/borealin and/or cdca9/dasra-A, and aurkb/aurora-B. Interacts directly with incenp (via N-terminus). Interacts with rxra; the interaction is stronger in the absence of 9-cis retinoic acids. Ubiquitination is required for centrosome-targeting. In terms of tissue distribution, exhibits strong and homogeneous expression in developing oocytes. In embryos, expressed in the animal hemisphere from one-cell to yolk plug stages, and highly expressed in the future brain and dorsal region of the neural tube at the neurula stage and early tail-bud stage. At tadpole stages, expression is restricted at a low level to the head region.

Its subcellular location is the cytoplasm. The protein localises to the nucleus. The protein resides in the chromosome. It localises to the centromere. It is found in the cytoskeleton. Its subcellular location is the spindle. Functionally, does not appear to exhibit anti-apoptotic activity. Plays a role in increasing blood vessel size during development. Component of the chromosomal passenger complex (CPC), a complex that acts as a key regulator of mitosis. The CPC complex has essential functions at the centromere in ensuring correct chromosome alignment and segregation and is required for chromatin-induced microtubule stabilization and spindle assembly. In Xenopus laevis (African clawed frog), this protein is Baculoviral IAP repeat-containing protein 5.2-B (birc5.2-b).